We begin with the raw amino-acid sequence, 170 residues long: Cathelicidin antimicrobial peptide (170 aa).

Residues 1–30 (MDTQRDSPSLGRWSLVLLLLGLVMPLAIVA) form the signal peptide. The propeptide at 31 to 131 (QVLSYQEAVL…DISCDKDNRR (101 aa)) is cathelin-like domain (CLD). Cystine bridges form between Cys86-Cys97 and Cys108-Cys125. The segment at 150 to 162 (FKRIVQRIKDFLQ) is active core.

This sequence belongs to the cathelicidin family. Monomer, homodimer or homotrimer (in vitro). Oligomerizes as tetra- or hexamer in solution (in vitro). In terms of processing, proteolytically cleaved by proteinase PRTN3 into antibacterial peptide LL-37. Proteolytically cleaved by cathepsin CTSG and neutrophil elastase ELANE. Resistant to proteolytic degradation in solution, and when bound to both zwitterionic (mimicking mammalian membranes) and negatively charged membranes (mimicking bacterial membranes). Post-translationally, after secretion onto the skin surface, the CAMP gene product is processed by a serine protease-dependent mechanism into multiple novel antimicrobial peptides distinct from and shorter than cathelicidin LL-37. These peptides show enhanced antimicrobial action, acquiring the ability to kill skin pathogens such as S.aureus, E.coli and C.albicans. These peptides have lost the ability to stimulate CXCL8/IL8 release from keratinocytes. The peptides act synergistically, killing bacteria at lower concentrations when present together, and maintain activity at increased salt condition.

Its subcellular location is the secreted. The protein resides in the vesicle. Its function is as follows. Antimicrobial protein that is an integral component of the innate immune system. Binds to bacterial lipopolysaccharides (LPS). Acts via neutrophil N-formyl peptide receptors to enhance the release of CXCL2. Postsecretory processing generates multiple cathelicidin antimicrobial peptides with various lengths which act as a topical antimicrobial defense in sweat on skin. The unprocessed precursor form, cathelicidin antimicrobial peptide, inhibits the growth of Gram-negative E.coli and E.aerogenes with efficiencies comparable to that of the mature peptide LL-37 (in vitro). Functionally, antimicrobial peptide that is an integral component of the innate immune system. Binds to bacterial lipopolysaccharides (LPS). Causes membrane permeabilization by forming transmembrane pores (in vitro). Causes lysis of E.coli. Exhibits antimicrobial activity against Gram-negative bacteria such as P.aeruginosa, S.typhimurium, E.aerogenes, E.coli and P.syringae, Gram-positive bacteria such as L.monocytogenes, S.epidermidis, S.pyogenes and S.aureus, as well as vancomycin-resistant enterococci (in vitro). Exhibits antimicrobial activity against methicillin-resistant S.aureus, P.mirabilis, and C.albicans in low-salt media, but not in media containing 100 mM NaCl (in vitro). Forms chiral supramolecular assemblies with quinolone signal (PQS) molecules of P.aeruginosa, which may lead to interference of bacterial quorum signaling and perturbance of bacterial biofilm formation. May form supramolecular fiber-like assemblies on bacterial membranes. Induces cytokine and chemokine producation as well as TNF/TNFA and CSF2/GMCSF production in normal human keratinocytes. Exhibits hemolytic activity against red blood cells. In terms of biological role, exhibits antimicrobial activity against E.coli and B.megaterium (in vitro). This is Cathelicidin antimicrobial peptide from Nomascus leucogenys (Northern white-cheeked gibbon).